A 100-amino-acid polypeptide reads, in one-letter code: Aspartyl/glutamyl-tRNA(Asn/Gln) amidotransferase subunit C (100 aa).

This sequence belongs to the GatC family. Heterotrimer of A, B and C subunits.

It catalyses the reaction L-glutamyl-tRNA(Gln) + L-glutamine + ATP + H2O = L-glutaminyl-tRNA(Gln) + L-glutamate + ADP + phosphate + H(+). The catalysed reaction is L-aspartyl-tRNA(Asn) + L-glutamine + ATP + H2O = L-asparaginyl-tRNA(Asn) + L-glutamate + ADP + phosphate + 2 H(+). Its function is as follows. Allows the formation of correctly charged Asn-tRNA(Asn) or Gln-tRNA(Gln) through the transamidation of misacylated Asp-tRNA(Asn) or Glu-tRNA(Gln) in organisms which lack either or both of asparaginyl-tRNA or glutaminyl-tRNA synthetases. The reaction takes place in the presence of glutamine and ATP through an activated phospho-Asp-tRNA(Asn) or phospho-Glu-tRNA(Gln). The chain is Aspartyl/glutamyl-tRNA(Asn/Gln) amidotransferase subunit C from Streptococcus agalactiae serotype III (strain NEM316).